The primary structure comprises 348 residues: Large ribosomal subunit protein uL10 (348 aa).

Positions 291–348 (LPEELRGVSAADTGAAEEEESTDEEAADADQADAAEDDDAADDDGDDEDAGDALGSLF) are disordered. Acidic residues predominate over residues 305–341 (AAEEEESTDEEAADADQADAAEDDDAADDDGDDEDAG).

This sequence belongs to the universal ribosomal protein uL10 family. In terms of assembly, part of the 50S ribosomal subunit. Forms part of the ribosomal stalk which helps the ribosome interact with GTP-bound translation factors. Forms a heptameric L10(L12)2(L12)2(L12)2 complex, where L10 forms an elongated spine to which the L12 dimers bind in a sequential fashion.

Forms part of the ribosomal stalk, playing a central role in the interaction of the ribosome with GTP-bound translation factors. The chain is Large ribosomal subunit protein uL10 from Haloferax volcanii (strain ATCC 29605 / DSM 3757 / JCM 8879 / NBRC 14742 / NCIMB 2012 / VKM B-1768 / DS2) (Halobacterium volcanii).